Consider the following 64-residue polypeptide: Prokaryotic ubiquitin-like protein UBact (64 aa).

The interval 1-64 (MFNGEEVILF…SERYRQRTGE (64 aa)) is disordered. The segment covering 22 to 64 (REIHKDAPAPKRPETKKTGDRLMDRMKKVDPNQSERYRQRTGE) has biased composition (basic and acidic residues). An Isoglutamyl lysine isopeptide (Glu-Lys) (interchain with K-? in acceptor proteins) cross-link involves residue Glu-64.

It belongs to the ubiquitin-like protein UBact family.

Its function is as follows. May function as a protein modifier covalently attached to lysine residues of substrate proteins. This may serve to target the modified proteins for degradation by proteasomes. This Leptospirillum ferriphilum (strain ML-04) protein is Prokaryotic ubiquitin-like protein UBact.